A 518-amino-acid polypeptide reads, in one-letter code: Probable triacylglyceride transporter BCG_1471c (518 aa).

14 consecutive transmembrane segments (helical) span residues 7–27 (VAIS…YVVV), 46–66 (RITW…PLLG), 76–96 (LMLQ…ALAG), 110–130 (IQGV…ADLW), 144–164 (AAQE…VWLL), 170–190 (VFWI…FSLP), 201–221 (VDLV…IGLY), 230–250 (VLPD…VAFF), 270–290 (PFLS…VTLV), 308–328 (AGML…GGWI), 337–357 (VAFA…HWPV), 379–401 (LVVA…LRVV), 408–428 (IASA…VAAL), and 475–495 (IFTI…LISG).

The protein belongs to the major facilitator superfamily.

It is found in the cell inner membrane. Inhibited by CCCP and valinomycin. In terms of biological role, in association with lipoprotein LprG probably transports triacylglycerides (TAG) across the inner cell membrane into the periplasm; TAG probably regulates lipid metabolism and growth regulation. Confers resistance to several drugs such as rifampicin, clofazimine and novobiocin; is also part of the oxidative stress response and is needed to maintain normal growth characteristics. Probably an efflux transporter, involved in maintaining correct cell wall permeability. Probably required with LprG for normal surface localization of lipoarabinomannan (LAM). Required for optimal growth on cholesterol. This chain is Probable triacylglyceride transporter BCG_1471c, found in Mycobacterium bovis (strain BCG / Pasteur 1173P2).